Here is a 226-residue protein sequence, read N- to C-terminus: ATP synthase F(0) complex subunit a (226 aa).

Transmembrane regions (helical) follow at residues 6–26, 68–88, 97–117, 138–158, 164–184, and 193–213; these read FAPF…IMIF, WTLM…LGLL, QLSM…LMGF, IPML…ALAV, ITAG…LSSI, and FTIL…QAYV.

Belongs to the ATPase A chain family. As to quaternary structure, component of the ATP synthase complex composed at least of ATP5F1A/subunit alpha, ATP5F1B/subunit beta, ATP5MC1/subunit c (homooctomer), MT-ATP6/subunit a, MT-ATP8/subunit 8, ATP5ME/subunit e, ATP5MF/subunit f, ATP5MG/subunit g, ATP5MK/subunit k, ATP5MJ/subunit j, ATP5F1C/subunit gamma, ATP5F1D/subunit delta, ATP5F1E/subunit epsilon, ATP5PF/subunit F6, ATP5PB/subunit b, ATP5PD/subunit d, ATP5PO/subunit OSCP. ATP synthase complex consists of a soluble F(1) head domain (subunits alpha(3) and beta(3)) - the catalytic core - and a membrane F(0) domain - the membrane proton channel (subunits c, a, 8, e, f, g, k and j). These two domains are linked by a central stalk (subunits gamma, delta, and epsilon) rotating inside the F1 region and a stationary peripheral stalk (subunits F6, b, d, and OSCP). Interacts with DNAJC30; interaction is direct.

It is found in the mitochondrion inner membrane. The enzyme catalyses H(+)(in) = H(+)(out). Its function is as follows. Subunit a, of the mitochondrial membrane ATP synthase complex (F(1)F(0) ATP synthase or Complex V) that produces ATP from ADP in the presence of a proton gradient across the membrane which is generated by electron transport complexes of the respiratory chain. ATP synthase complex consist of a soluble F(1) head domain - the catalytic core - and a membrane F(1) domain - the membrane proton channel. These two domains are linked by a central stalk rotating inside the F(1) region and a stationary peripheral stalk. During catalysis, ATP synthesis in the catalytic domain of F(1) is coupled via a rotary mechanism of the central stalk subunits to proton translocation. With the subunit c (ATP5MC1), forms the proton-conducting channel in the F(0) domain, that contains two crucial half-channels (inlet and outlet) that facilitate proton movement from the mitochondrial intermembrane space (IMS) into the matrix. Protons are taken up via the inlet half-channel and released through the outlet half-channel, following a Grotthuss mechanism. The protein is ATP synthase F(0) complex subunit a of Ornithorhynchus anatinus (Duckbill platypus).